Here is a 1548-residue protein sequence, read N- to C-terminus: Zinc finger MYM-type protein 4 (1548 aa).

Alanine 2 bears the N-acetylalanine mark. At threonine 107 the chain carries Phosphothreonine. Phosphoserine occurs at positions 110 and 122. Glycyl lysine isopeptide (Lys-Gly) (interchain with G-Cter in SUMO2) cross-links involve residues lysine 140 and lysine 149. Serine 162 carries the post-translational modification Phosphoserine. The interval 162–189 (SKETFSGKEKNRDLTYEREKRLDKPHKD) is disordered. Lysine 195 is covalently cross-linked (Glycyl lysine isopeptide (Lys-Gly) (interchain with G-Cter in SUMO2)). A Phosphoserine modification is found at serine 197. Residues lysine 201 and lysine 232 each participate in a glycyl lysine isopeptide (Lys-Gly) (interchain with G-Cter in SUMO2) cross-link. Serine 242 is modified (phosphoserine). Lysine 250 is covalently cross-linked (Glycyl lysine isopeptide (Lys-Gly) (interchain with G-Cter in SUMO1); alternate). Residue lysine 250 forms a Glycyl lysine isopeptide (Lys-Gly) (interchain with G-Cter in SUMO2); alternate linkage. Glycyl lysine isopeptide (Lys-Gly) (interchain with G-Cter in SUMO2) cross-links involve residues lysine 260, lysine 271, lysine 273, lysine 289, lysine 327, lysine 400, lysine 428, and lysine 430. 9 consecutive MYM-type zinc fingers follow at residues 362 to 402 (QLFC…PKDV), 414 to 457 (KDFC…RHEV), 464 to 499 (HKLC…GSGQ), 510 to 544 (KKFC…AEMI), 554 to 592 (ELFC…QYHL), 600 to 631 (RNFC…LSQG), 708 to 742 (FQFC…KETV), 749 to 788 (KSFC…LVQN), and 795 to 829 (EEFC…SESL). Residue serine 1030 is modified to Phosphoserine. Residues lysine 1035 and lysine 1061 each participate in a glycyl lysine isopeptide (Lys-Gly) (interchain with G-Cter in SUMO2) cross-link. Residues serine 1064 and serine 1071 each carry the phosphoserine modification. Glycyl lysine isopeptide (Lys-Gly) (interchain with G-Cter in SUMO2) cross-links involve residues lysine 1080 and lysine 1127. Residues 1124-1134 (SELKQFSKGET) show a composition bias toward basic and acidic residues. 2 disordered regions span residues 1124–1183 (SELK…KSIV) and 1231–1260 (KCGG…QESS). The span at 1160 to 1181 (SRTRRRHRDGFPQPRRRGRKKS) shows a compositional bias: basic residues. A phosphoserine mark is found at serine 1181 and serine 1256. Polar residues predominate over residues 1237 to 1260 (QASSSPRSDPLGSTQDHALSQESS). A Glycyl lysine isopeptide (Lys-Gly) (interchain with G-Cter in SUMO2) cross-link involves residue lysine 1431. Phosphoserine occurs at positions 1539, 1542, and 1547.

As to expression, expressed at higher level in heart, skeletal muscle, kidney and liver.

Its function is as follows. Plays a role in the regulation of cell morphology and cytoskeletal organization. The protein is Zinc finger MYM-type protein 4 (ZMYM4) of Homo sapiens (Human).